The sequence spans 136 residues: Fatty acid-binding protein homolog 5 (136 aa).

Residues Arg111 and 131-133 contribute to the a fatty acid site; that span reads RAY.

Belongs to the calycin superfamily. Fatty-acid binding protein (FABP) family.

This is Fatty acid-binding protein homolog 5 (lbp-5) from Caenorhabditis elegans.